The chain runs to 296 residues: Diaminopimelate epimerase (296 aa).

Positions 17, 49, and 69 each coordinate substrate. C78 functions as the Proton donor in the catalytic mechanism. Residues 79-80, N171, N205, and 223-224 each bind substrate; these read GN and ER. C232 serves as the catalytic Proton acceptor. Residue 233–234 participates in substrate binding; that stretch reads GT.

It belongs to the diaminopimelate epimerase family. As to quaternary structure, homodimer.

The protein localises to the cytoplasm. It carries out the reaction (2S,6S)-2,6-diaminopimelate = meso-2,6-diaminopimelate. It functions in the pathway amino-acid biosynthesis; L-lysine biosynthesis via DAP pathway; DL-2,6-diaminopimelate from LL-2,6-diaminopimelate: step 1/1. Its function is as follows. Catalyzes the stereoinversion of LL-2,6-diaminopimelate (L,L-DAP) to meso-diaminopimelate (meso-DAP), a precursor of L-lysine and an essential component of the bacterial peptidoglycan. In Methylorubrum extorquens (strain PA1) (Methylobacterium extorquens), this protein is Diaminopimelate epimerase.